Reading from the N-terminus, the 314-residue chain is Mevalonate kinase (314 aa).

Position 103 to 109 (103 to 109) interacts with ATP; the sequence is GLGTSAA. Residue aspartate 150 is the Proton acceptor of the active site.

The protein belongs to the GHMP kinase family. Mevalonate kinase subfamily. As to quaternary structure, homodimer. Mg(2+) serves as cofactor.

It is found in the cytoplasm. The enzyme catalyses (R)-mevalonate + ATP = (R)-5-phosphomevalonate + ADP + H(+). It participates in isoprenoid biosynthesis; isopentenyl diphosphate biosynthesis via mevalonate pathway; isopentenyl diphosphate from (R)-mevalonate: step 1/3. In terms of biological role, catalyzes the phosphorylation of (R)-mevalonate (MVA) to (R)-mevalonate 5-phosphate (MVAP). Functions in the mevalonate (MVA) pathway leading to isopentenyl diphosphate (IPP), a key precursor for the biosynthesis of isoprenoid compounds such as archaeal membrane lipids. In Saccharolobus solfataricus (strain ATCC 35092 / DSM 1617 / JCM 11322 / P2) (Sulfolobus solfataricus), this protein is Mevalonate kinase.